Here is a 336-residue protein sequence, read N- to C-terminus: HTH-type transcriptional repressor PurR (336 aa).

The HTH lacI-type domain occupies 2–56; it reads ATIKDVAKLAGVSTTTVSHVINKTRFVAEDTSKAVWDAIQQLNYSPSAVARSLKV. The H-T-H motif DNA-binding region spans 4–23; sequence IKDVAKLAGVSTTTVSHVIN. The DNA-binding element occupies 48-56; that stretch reads SAVARSLKV. Hypoxanthine contacts are provided by tyrosine 73, lysine 188, phenylalanine 219, and aspartate 273.

As to quaternary structure, homodimer.

The protein operates within purine metabolism; purine nucleotide biosynthesis [regulation]. In terms of biological role, is the main repressor of the genes involved in the de novo synthesis of purine nucleotides, regulating purB, purC, purEK, purF, purHD, purL, purMN and guaBA expression. PurR is allosterically activated to bind its cognate DNA by binding the purine corepressors, hypoxanthine or guanine, thereby effecting transcription repression. The chain is HTH-type transcriptional repressor PurR from Actinobacillus pleuropneumoniae serotype 5b (strain L20).